The following is a 264-amino-acid chain: uncharacterized protein (264 aa).

Residues 3–243 (LQLDNVSLKR…QILSAFFDTP (241 aa)) form the ABC transporter domain. 35-42 (GLNGAGKT) lines the ATP pocket.

This sequence belongs to the ABC transporter superfamily.

This is an uncharacterized protein from Bacillus subtilis (strain 168).